Reading from the N-terminus, the 186-residue chain is Translation initiation factor IF-3 (186 aa).

This sequence belongs to the IF-3 family. In terms of assembly, monomer.

The protein resides in the cytoplasm. In terms of biological role, IF-3 binds to the 30S ribosomal subunit and shifts the equilibrium between 70S ribosomes and their 50S and 30S subunits in favor of the free subunits, thus enhancing the availability of 30S subunits on which protein synthesis initiation begins. The protein is Translation initiation factor IF-3 of Borrelia garinii subsp. bavariensis (strain ATCC BAA-2496 / DSM 23469 / PBi) (Borreliella bavariensis).